Consider the following 268-residue polypeptide: uncharacterized protein (268 aa).

The protein to yeast YKR075c.

This is an uncharacterized protein from Saccharomyces cerevisiae (strain ATCC 204508 / S288c) (Baker's yeast).